A 361-amino-acid polypeptide reads, in one-letter code: Terpene synthase 6 (361 aa).

The DDxx(x)D/E motif signature appears at 81–86; the sequence is DDVLDA. Positions 223–231 match the NDxxSxxxD/E motif motif; it reads NDLVSYEKE.

The protein belongs to the terpene synthase family.

It catalyses the reaction (2E,6E)-farnesyl diphosphate = (2S,3R,6S,9S)-(-)-protoillud-7-ene + diphosphate. Functionally, terpene synthase that converts its substrate farnesyl diphosphate (FPP) into the sesquiterpene (2S,3R,6S,9S)-(-)-protoillud-7-ene. The polypeptide is Terpene synthase 6 (Dictyostelium discoideum (Social amoeba)).